A 585-amino-acid polypeptide reads, in one-letter code: 4-hydroxy-3-methylbut-2-en-1-yl diphosphate synthase (flavodoxin) (585 aa).

Residues cysteine 492, cysteine 495, cysteine 526, and glutamate 533 each contribute to the [4Fe-4S] cluster site.

Belongs to the IspG family. It depends on [4Fe-4S] cluster as a cofactor.

It catalyses the reaction (2E)-4-hydroxy-3-methylbut-2-enyl diphosphate + oxidized [flavodoxin] + H2O + 2 H(+) = 2-C-methyl-D-erythritol 2,4-cyclic diphosphate + reduced [flavodoxin]. The protein operates within isoprenoid biosynthesis; isopentenyl diphosphate biosynthesis via DXP pathway; isopentenyl diphosphate from 1-deoxy-D-xylulose 5-phosphate: step 5/6. In terms of biological role, converts 2C-methyl-D-erythritol 2,4-cyclodiphosphate (ME-2,4cPP) into 1-hydroxy-2-methyl-2-(E)-butenyl 4-diphosphate. This is 4-hydroxy-3-methylbut-2-en-1-yl diphosphate synthase (flavodoxin) from Akkermansia muciniphila (strain ATCC BAA-835 / DSM 22959 / JCM 33894 / BCRC 81048 / CCUG 64013 / CIP 107961 / Muc).